We begin with the raw amino-acid sequence, 704 residues long: Capsule polysaccharide modification protein LipA (704 aa).

The protein localises to the cell inner membrane. Its function is as follows. Involved in the phospholipid modification of the capsular polysaccharide, a strong requirement for its translocation to the cell surface. The sequence is that of Capsule polysaccharide modification protein LipA (lipA) from Neisseria meningitidis serogroup A / serotype 4A (strain DSM 15465 / Z2491).